The primary structure comprises 207 residues: Transcription antitermination protein NusB (207 aa).

It belongs to the NusB family.

Involved in transcription antitermination. Required for transcription of ribosomal RNA (rRNA) genes. Binds specifically to the boxA antiterminator sequence of the ribosomal RNA (rrn) operons. The chain is Transcription antitermination protein NusB from Trichodesmium erythraeum (strain IMS101).